A 351-amino-acid chain; its full sequence is UDP-N-acetylglucosamine--N-acetylmuramyl-(pentapeptide) pyrophosphoryl-undecaprenol N-acetylglucosamine transferase (351 aa).

UDP-N-acetyl-alpha-D-glucosamine-binding positions include 13-15 (TGG), N125, R161, S189, I241, 260-265 (ALTVCE), and Q285.

The protein belongs to the glycosyltransferase 28 family. MurG subfamily.

The protein resides in the cell inner membrane. The enzyme catalyses di-trans,octa-cis-undecaprenyl diphospho-N-acetyl-alpha-D-muramoyl-L-alanyl-D-glutamyl-meso-2,6-diaminopimeloyl-D-alanyl-D-alanine + UDP-N-acetyl-alpha-D-glucosamine = di-trans,octa-cis-undecaprenyl diphospho-[N-acetyl-alpha-D-glucosaminyl-(1-&gt;4)]-N-acetyl-alpha-D-muramoyl-L-alanyl-D-glutamyl-meso-2,6-diaminopimeloyl-D-alanyl-D-alanine + UDP + H(+). Its pathway is cell wall biogenesis; peptidoglycan biosynthesis. Cell wall formation. Catalyzes the transfer of a GlcNAc subunit on undecaprenyl-pyrophosphoryl-MurNAc-pentapeptide (lipid intermediate I) to form undecaprenyl-pyrophosphoryl-MurNAc-(pentapeptide)GlcNAc (lipid intermediate II). In Haemophilus influenzae (strain PittGG), this protein is UDP-N-acetylglucosamine--N-acetylmuramyl-(pentapeptide) pyrophosphoryl-undecaprenol N-acetylglucosamine transferase.